Here is a 387-residue protein sequence, read N- to C-terminus: Anhydro-N-acetylmuramic acid kinase (387 aa).

9–16 (GTSADGVD) is a binding site for ATP.

This sequence belongs to the anhydro-N-acetylmuramic acid kinase family.

The enzyme catalyses 1,6-anhydro-N-acetyl-beta-muramate + ATP + H2O = N-acetyl-D-muramate 6-phosphate + ADP + H(+). The protein operates within amino-sugar metabolism; 1,6-anhydro-N-acetylmuramate degradation. It participates in cell wall biogenesis; peptidoglycan recycling. Functionally, catalyzes the specific phosphorylation of 1,6-anhydro-N-acetylmuramic acid (anhMurNAc) with the simultaneous cleavage of the 1,6-anhydro ring, generating MurNAc-6-P. Is required for the utilization of anhMurNAc either imported from the medium or derived from its own cell wall murein, and thus plays a role in cell wall recycling. The sequence is that of Anhydro-N-acetylmuramic acid kinase from Synechococcus sp. (strain WH7803).